Reading from the N-terminus, the 303-residue chain is Oxygen-dependent coproporphyrinogen-III oxidase (303 aa).

Ser-93 is a binding site for substrate. A divalent metal cation is bound by residues His-97 and His-107. His-107 (proton donor) is an active-site residue. 109-111 (NVR) is a substrate binding site. The a divalent metal cation site is built by His-149 and His-179. Residues 244–279 (YVEFNLVFDRGTLFGLQSGGRTESILLSMPPMAQWR) are important for dimerization. 262–264 (GGR) serves as a coordination point for substrate.

It belongs to the aerobic coproporphyrinogen-III oxidase family. In terms of assembly, homodimer. The cofactor is a divalent metal cation.

Its subcellular location is the cytoplasm. The catalysed reaction is coproporphyrinogen III + O2 + 2 H(+) = protoporphyrinogen IX + 2 CO2 + 2 H2O. The protein operates within porphyrin-containing compound metabolism; protoporphyrin-IX biosynthesis; protoporphyrinogen-IX from coproporphyrinogen-III (O2 route): step 1/1. Involved in the heme biosynthesis. Catalyzes the aerobic oxidative decarboxylation of propionate groups of rings A and B of coproporphyrinogen-III to yield the vinyl groups in protoporphyrinogen-IX. This Bordetella petrii (strain ATCC BAA-461 / DSM 12804 / CCUG 43448) protein is Oxygen-dependent coproporphyrinogen-III oxidase.